Here is a 380-residue protein sequence, read N- to C-terminus: Lipid-A-disaccharide synthase (380 aa).

Belongs to the LpxB family.

It catalyses the reaction a lipid X + a UDP-2-N,3-O-bis[(3R)-3-hydroxyacyl]-alpha-D-glucosamine = a lipid A disaccharide + UDP + H(+). It functions in the pathway bacterial outer membrane biogenesis; LPS lipid A biosynthesis. Its function is as follows. Condensation of UDP-2,3-diacylglucosamine and 2,3-diacylglucosamine-1-phosphate to form lipid A disaccharide, a precursor of lipid A, a phosphorylated glycolipid that anchors the lipopolysaccharide to the outer membrane of the cell. This chain is Lipid-A-disaccharide synthase, found in Francisella tularensis subsp. tularensis (strain FSC 198).